Consider the following 162-residue polypeptide: Phosphopantetheine adenylyltransferase (162 aa).

Residue Ser-9 coordinates substrate. ATP is bound by residues 9-10 (SF) and His-17. Residues Lys-41, Leu-77, and Lys-91 each contribute to the substrate site. ATP contacts are provided by residues 92–94 (GLR), Glu-102, and 126–132 (YAFLSSS).

It belongs to the bacterial CoaD family. Homohexamer. It depends on Mg(2+) as a cofactor.

Its subcellular location is the cytoplasm. It catalyses the reaction (R)-4'-phosphopantetheine + ATP + H(+) = 3'-dephospho-CoA + diphosphate. It functions in the pathway cofactor biosynthesis; coenzyme A biosynthesis; CoA from (R)-pantothenate: step 4/5. Its function is as follows. Reversibly transfers an adenylyl group from ATP to 4'-phosphopantetheine, yielding dephospho-CoA (dPCoA) and pyrophosphate. This chain is Phosphopantetheine adenylyltransferase, found in Parafrankia sp. (strain EAN1pec).